A 429-amino-acid chain; its full sequence is Probable electron transfer flavoprotein-quinone oxidoreductase YdiS (429 aa).

8–22 (AIVVGAGVAGSVAAL) contacts FAD.

Belongs to the ETF-QO/FixC family. FAD is required as a cofactor.

Functionally, probably accepts electrons from YdiQ/YdiR and reduces a quinone. This is Probable electron transfer flavoprotein-quinone oxidoreductase YdiS (ydiS) from Escherichia coli (strain K12).